Consider the following 453-residue polypeptide: Tubulin alpha-1 chain (453 aa).

GTP contacts are provided by glutamine 11, glutamate 71, glycine 144, threonine 145, threonine 179, asparagine 206, and asparagine 228. Position 71 (glutamate 71) interacts with Mg(2+). Glutamate 254 is a catalytic residue. A disordered region spans residues 433–453 (EEVGAETADGDGEEEEFGEEY).

It belongs to the tubulin family. Dimer of alpha and beta chains. A typical microtubule is a hollow water-filled tube with an outer diameter of 25 nm and an inner diameter of 15 nM. Alpha-beta heterodimers associate head-to-tail to form protofilaments running lengthwise along the microtubule wall with the beta-tubulin subunit facing the microtubule plus end conferring a structural polarity. Microtubules usually have 13 protofilaments but different protofilament numbers can be found in some organisms and specialized cells. Mg(2+) is required as a cofactor. Undergoes a tyrosination/detyrosination cycle, the cyclic removal and re-addition of a C-terminal tyrosine residue by the enzymes tubulin tyrosine carboxypeptidase (TTCP) and tubulin tyrosine ligase (TTL), respectively.

The protein localises to the cytoplasm. It localises to the cytoskeleton. The enzyme catalyses GTP + H2O = GDP + phosphate + H(+). Functionally, tubulin is the major constituent of microtubules, a cylinder consisting of laterally associated linear protofilaments composed of alpha- and beta-tubulin heterodimers. Microtubules grow by the addition of GTP-tubulin dimers to the microtubule end, where a stabilizing cap forms. Below the cap, tubulin dimers are in GDP-bound state, owing to GTPase activity of alpha-tubulin. The polypeptide is Tubulin alpha-1 chain (TUBA1) (Pelvetia fastigiata (Brown alga)).